A 681-amino-acid polypeptide reads, in one-letter code: UvrABC system protein C (681 aa).

Positions 16–95 (DSPGVYKFRD…IKEYDPRFNV (80 aa)) constitute a GIY-YIG domain. The 36-residue stretch at 208 to 243 (GTYIRRLERQMTDAAEEMEYEKAARLRDDIGALKKA) folds into the UVR domain. The tract at residues 650 to 681 (EIMEDEEPGTTAGSSQEPVSAGTSDERRGQET) is disordered. Residues 660–672 (TAGSSQEPVSAGT) are compositionally biased toward polar residues.

The protein belongs to the UvrC family. As to quaternary structure, interacts with UvrB in an incision complex.

Its subcellular location is the cytoplasm. The UvrABC repair system catalyzes the recognition and processing of DNA lesions. UvrC both incises the 5' and 3' sides of the lesion. The N-terminal half is responsible for the 3' incision and the C-terminal half is responsible for the 5' incision. This is UvrABC system protein C from Streptomyces avermitilis (strain ATCC 31267 / DSM 46492 / JCM 5070 / NBRC 14893 / NCIMB 12804 / NRRL 8165 / MA-4680).